A 319-amino-acid polypeptide reads, in one-letter code: tRNA (guanine(9)-N(1))-methyltransferase Trmt10A (319 aa).

Disordered regions lie at residues 16-87 (LSLN…KRQL) and 275-319 (AKIT…SLDS). The span at 17-33 (SLNNCPGTTPGTPMSKN) shows a compositional bias: polar residues. The Nuclear localization signal motif lies at 35 to 42 (LKKQRKLA). Composition is skewed to basic and acidic residues over residues 40–58 (KLAE…EREK), 78–87 (SRKELKKRQL), and 276–302 (KITD…ESDK). Residues 44–67 (FAELRKLRREREREKKKQKRREAK) adopt a coiled-coil conformation. In terms of domain architecture, SAM-dependent MTase TRM10-type spans 83–274 (KKRQLADGGK…ETIPMRKGAK (192 aa)).

It belongs to the class IV-like SAM-binding methyltransferase superfamily. TRM10 family.

The protein localises to the nucleus. Its subcellular location is the nucleolus. It localises to the chromosome. It catalyses the reaction guanosine(9) in tRNA + S-adenosyl-L-methionine = N(1)-methylguanosine(9) in tRNA + S-adenosyl-L-homocysteine + H(+). Its function is as follows. S-adenosyl-L-methionine-dependent guanine N(1)-methyltransferase that catalyzes the formation of N(1)-methylguanine at position 9 (m1G9) in tRNAs. Modulates Mettl3-mediated N6-methyladenosine (m6A) methylation of mRNA 5'-UTRs and 3'-UTRs independent of its methyltransferase activity; influences mRNA stability and protein levels, in particular of Hsp70 chaperone proteins and other stress response proteins. Also regulates stability of transcripts encoding proteins involved in signaling processes and proteins involved in neurogenesis and axon guidance pathways. The sequence is that of tRNA (guanine(9)-N(1))-methyltransferase Trmt10A from Drosophila melanogaster (Fruit fly).